The chain runs to 171 residues: Shikimate kinase (171 aa).

Position 14–19 (14–19 (GAGKST)) interacts with ATP. Ser-18 contributes to the Mg(2+) binding site. 3 residues coordinate substrate: Asp-36, Arg-60, and Gly-82. Residue Arg-120 participates in ATP binding. Substrate is bound at residue Arg-139. Gln-156 serves as a coordination point for ATP.

The protein belongs to the shikimate kinase family. Monomer. It depends on Mg(2+) as a cofactor.

It is found in the cytoplasm. It carries out the reaction shikimate + ATP = 3-phosphoshikimate + ADP + H(+). It participates in metabolic intermediate biosynthesis; chorismate biosynthesis; chorismate from D-erythrose 4-phosphate and phosphoenolpyruvate: step 5/7. Functionally, catalyzes the specific phosphorylation of the 3-hydroxyl group of shikimic acid using ATP as a cosubstrate. This Shewanella sp. (strain MR-4) protein is Shikimate kinase.